A 361-amino-acid chain; its full sequence is MGNVLAASSPPAGPPPPPTPSLVGLPPPPPSPPGFTLPPLGGGLGTGSSTGRGSERTPGAAASGAAAASEDGSCGCLPNPGTFEECHRKCKELFPVQMEGVKLTVNKGLSNRFQVTHTVALGTIGESNYHFGVTYVGTKQLSPTEAFPVLVGDMDNSGSLNAQVIHQLSPGLRSKMAIQTQQSKFVNWQVDGEYRGSDFTAAVTLGNPDVLVGSGILVAHYLQSITPCLALGGELVYHRRPGEEGTVMSLAGKYTLNNWLATVTLGQAGMHATYYHKASDQLQVGVEFEASTRMQDTSASFGYQLDLPKANFLFKGSVNSNWIVGATLEKKLPPLPLTLSLCAFLNHRKNKFLCGFGLTIG.

The interval 1 to 73 is disordered; it reads MGNVLAASSP…GAAAASEDGS (73 aa). The segment covering 11 to 36 has biased composition (pro residues); it reads PAGPPPPPTPSLVGLPPPPPSPPGFT. Positions 40–50 are enriched in gly residues; the sequence is LGGGLGTGSST. The segment covering 51-69 has biased composition (low complexity); that stretch reads GRGSERTPGAAASGAAAAS.

This sequence belongs to the Tom40 family. As to quaternary structure, forms part of the preprotein translocase complex of the outer mitochondrial membrane (TOM complex) which consists of at least 7 different proteins (TOMM5, TOMM6, TOMM7, TOMM20, TOMM22, TOMM40 and TOMM70). Interacts with mitochondrial targeting sequences. Interacts with TIMM29; linking the TIM22 complex to the TOM complex. Forms a complex with BCAP31 (via C-terminus) which mediates the translocation of components of the mitochondrial membrane respiratory chain NADH dehydrogenase (Complex I) from the cytosol to the mitochondria. Interacts (via N-terminus) with CYP1A1 (via mitochondrial targeting signal); this interaction is required for CYP1A1 translocation across the mitochondrial outer membrane.

It localises to the mitochondrion outer membrane. In terms of biological role, channel-forming protein essential for import of protein precursors into mitochondria. Plays a role in the assembly of the mitochondrial membrane respiratory chain NADH dehydrogenase (Complex I) by forming a complex with BCAP31 and mediating the translocation of Complex I components from the cytosol to the mitochondria. The polypeptide is Mitochondrial import receptor subunit TOM40 homolog (Tomm40) (Mus musculus (Mouse)).